The sequence spans 596 residues: Aspartate--tRNA(Asp/Asn) ligase (596 aa).

An L-aspartate-binding site is contributed by Glu175. The tract at residues Gln199–Lys202 is aspartate. The L-aspartate site is built by Arg221 and His454. Residue Arg221 to Glu223 coordinates ATP. Position 488 (Glu488) interacts with ATP. L-aspartate is bound at residue Arg495. Residue Gly540–Arg543 coordinates ATP.

The protein belongs to the class-II aminoacyl-tRNA synthetase family. Type 1 subfamily. As to quaternary structure, homodimer.

It is found in the cytoplasm. It carries out the reaction tRNA(Asx) + L-aspartate + ATP = L-aspartyl-tRNA(Asx) + AMP + diphosphate. In terms of biological role, aspartyl-tRNA synthetase with relaxed tRNA specificity since it is able to aspartylate not only its cognate tRNA(Asp) but also tRNA(Asn). Reaction proceeds in two steps: L-aspartate is first activated by ATP to form Asp-AMP and then transferred to the acceptor end of tRNA(Asp/Asn). The sequence is that of Aspartate--tRNA(Asp/Asn) ligase from Mesorhizobium japonicum (strain LMG 29417 / CECT 9101 / MAFF 303099) (Mesorhizobium loti (strain MAFF 303099)).